The chain runs to 151 residues: Multiprotein-bridging factor 1 (151 aa).

The disordered stretch occupies residues 1 to 31 (MSDWESHTVIGQKARAGGSGPRANVARTQGQ). The HTH cro/C1-type domain occupies 85 to 139 (IARVRTEKKMSQKDLATKINEKPTVINDYEAGRAIPNQQVLGKMERALGVKLRGK). The segment at residues 96 to 115 (QKDLATKINEKPTVINDYEA) is a DNA-binding region (H-T-H motif).

It belongs to the MBF1 family.

Its function is as follows. Transcriptional coactivator that stimulates GCN4-dependent transcriptional activity by bridging the DNA-binding region of GCN4 and TBP (SPT15), thereby recruiting TBP to GCN4-bound promoters. Involved in induction of the ribosome quality control (RQC) pathway; a pathway that degrades nascent peptide chains during problematic translation. Required to prevent stalled ribosomes from frameshifting. In Candida glabrata (strain ATCC 2001 / BCRC 20586 / JCM 3761 / NBRC 0622 / NRRL Y-65 / CBS 138) (Yeast), this protein is Multiprotein-bridging factor 1 (MBF1).